A 72-amino-acid chain; its full sequence is Translation initiation factor IF-1 (72 aa).

The region spanning 1–72 (MAKEDCIEME…TKGRIKFRSK (72 aa)) is the S1-like domain.

Belongs to the IF-1 family. As to quaternary structure, component of the 30S ribosomal translation pre-initiation complex which assembles on the 30S ribosome in the order IF-2 and IF-3, IF-1 and N-formylmethionyl-tRNA(fMet); mRNA recruitment can occur at any time during PIC assembly.

The protein localises to the cytoplasm. One of the essential components for the initiation of protein synthesis. Stabilizes the binding of IF-2 and IF-3 on the 30S subunit to which N-formylmethionyl-tRNA(fMet) subsequently binds. Helps modulate mRNA selection, yielding the 30S pre-initiation complex (PIC). Upon addition of the 50S ribosomal subunit IF-1, IF-2 and IF-3 are released leaving the mature 70S translation initiation complex. The chain is Translation initiation factor IF-1 from Francisella tularensis subsp. tularensis (strain FSC 198).